The sequence spans 346 residues: Phosphoribosylformylglycinamidine cyclo-ligase (346 aa).

The protein belongs to the AIR synthase family.

The protein localises to the cytoplasm. It carries out the reaction 2-formamido-N(1)-(5-O-phospho-beta-D-ribosyl)acetamidine + ATP = 5-amino-1-(5-phospho-beta-D-ribosyl)imidazole + ADP + phosphate + H(+). It participates in purine metabolism; IMP biosynthesis via de novo pathway; 5-amino-1-(5-phospho-D-ribosyl)imidazole from N(2)-formyl-N(1)-(5-phospho-D-ribosyl)glycinamide: step 2/2. The polypeptide is Phosphoribosylformylglycinamidine cyclo-ligase (Alteromonas mediterranea (strain DSM 17117 / CIP 110805 / LMG 28347 / Deep ecotype)).